Consider the following 687-residue polypeptide: Triadin (687 aa).

Residues 1–47 lie on the Cytoplasmic side of the membrane; sequence MTEITAEGNASITTTVIDNKNGSVPKSPGKVLKRTVTEDIVTTFSSP. The helical transmembrane segment at 48 to 68 threads the bilayer; that stretch reads AAWLLVIALIITWSAVAIVMF. The Lumenal segment spans residues 69–687; sequence DLVDYKNFSA…NSPGQKQQEQ (619 aa). Over residues 117-130 the composition is skewed to acidic residues; it reads DGDEDDEDADEDID. Disordered stretches follow at residues 117–265, 280–643, and 660–687; these read DGDE…EQKD, GDLK…QKSP, and FQFPVTPVQHSGENPGKSNSPGQKQQEQ. Residues 131–265 show a composition bias toward basic and acidic residues; it reads KGEIEEPPLK…PAVPKHEQKD (135 aa). Residues 295–306 are compositionally biased toward polar residues; sequence LTASRPALSTPS. S303 and S306 each carry phosphoserine. Over residues 307–356 the composition is skewed to basic and acidic residues; the sequence is LEEKEKEEKKKVEKKVTSDTKKKEKGEAKKKSEKETVIDGKGKEPGKPPE. The span at 357-370 shows a compositional bias: low complexity; sequence TKQTTTKLTTQAAA. 4 stretches are compositionally biased toward basic and acidic residues: residues 371–390, 396–431, 442–459, and 466–501; these read TKDEKKEDSKKMKKPPEEKP, EKKEKHIEPAKTPKKEHPAPSEKHRKAKAEQAKEEI, GKKEEKAKTVEQGKDVKP, and LKKEEKSEPQPKKEVKLETQLKKEEKSEPQVKKEAK. N514 carries N-linked (GlcNAc...) asparagine glycosylation. Basic and acidic residues-rich tracts occupy residues 539-583 and 594-630; these read TAEK…KVPP and TRAEKRGKISKDSKDAPAPKKDKDSKDVLHSKKDKEV. 2 stretches are compositionally biased toward polar residues: residues 631-643 and 667-687; these read TNNVSSPKKQKSP and VQHSGENPGKSNSPGQKQQEQ.

In terms of assembly, homooligomer of variable subunit number; disulfide-linked. Interacts with CASQ1 in skeletal muscle. Interacts with CASQ2. Interacts with RYR1 in skeletal muscle. Phosphorylated by CaMK2. In terms of processing, N-glycosylated. In terms of tissue distribution, detected in skeletal muscle (at protein level). Detected in skeletal muscle.

It localises to the sarcoplasmic reticulum membrane. The protein localises to the microsome. It is found in the cell membrane. Its subcellular location is the sarcolemma. Contributes to the regulation of lumenal Ca2+ release via the sarcoplasmic reticulum calcium release channels RYR1 and RYR2, a key step in triggering skeletal and heart muscle contraction. Required for normal organization of the triad junction, where T-tubules and the sarcoplasmic reticulum terminal cisternae are in close contact. Required for normal skeletal muscle strength. Plays a role in excitation-contraction coupling in the heart and in regulating the rate of heart beats. The protein is Triadin of Rattus norvegicus (Rat).